We begin with the raw amino-acid sequence, 365 residues long: Putative glycosyltransferase C06E1.7 (365 aa).

It belongs to the glycosyltransferase 11 family.

This chain is Putative glycosyltransferase C06E1.7, found in Caenorhabditis elegans.